A 157-amino-acid polypeptide reads, in one-letter code: Endoribonuclease YbeY (157 aa).

Zn(2+)-binding residues include His-114, His-118, and His-124.

It belongs to the endoribonuclease YbeY family. It depends on Zn(2+) as a cofactor.

The protein resides in the cytoplasm. In terms of biological role, single strand-specific metallo-endoribonuclease involved in late-stage 70S ribosome quality control and in maturation of the 3' terminus of the 16S rRNA. This is Endoribonuclease YbeY from Salmonella typhimurium (strain LT2 / SGSC1412 / ATCC 700720).